A 144-amino-acid chain; its full sequence is D-aminoacyl-tRNA deacylase (144 aa).

Residues 136–137 (GP) carry the Gly-cisPro motif, important for rejection of L-amino acids motif.

Belongs to the DTD family. As to quaternary structure, homodimer.

The protein resides in the cytoplasm. The enzyme catalyses glycyl-tRNA(Ala) + H2O = tRNA(Ala) + glycine + H(+). It carries out the reaction a D-aminoacyl-tRNA + H2O = a tRNA + a D-alpha-amino acid + H(+). In terms of biological role, an aminoacyl-tRNA editing enzyme that deacylates mischarged D-aminoacyl-tRNAs. Also deacylates mischarged glycyl-tRNA(Ala), protecting cells against glycine mischarging by AlaRS. Acts via tRNA-based rather than protein-based catalysis; rejects L-amino acids rather than detecting D-amino acids in the active site. By recycling D-aminoacyl-tRNA to D-amino acids and free tRNA molecules, this enzyme counteracts the toxicity associated with the formation of D-aminoacyl-tRNA entities in vivo and helps enforce protein L-homochirality. This Actinobacillus pleuropneumoniae serotype 5b (strain L20) protein is D-aminoacyl-tRNA deacylase.